A 207-amino-acid polypeptide reads, in one-letter code: GTP cyclohydrolase-2 (207 aa).

GTP is bound at residue 49-53 (RTHSE). Zn(2+)-binding residues include C54, C65, and C67. GTP-binding positions include Q70, 92-94 (EGR), and T114. The active-site Proton acceptor is the D126. Residue R128 is the Nucleophile of the active site. GTP contacts are provided by T149 and K154.

It belongs to the GTP cyclohydrolase II family. The cofactor is Zn(2+).

It catalyses the reaction GTP + 4 H2O = 2,5-diamino-6-hydroxy-4-(5-phosphoribosylamino)-pyrimidine + formate + 2 phosphate + 3 H(+). It participates in cofactor biosynthesis; riboflavin biosynthesis; 5-amino-6-(D-ribitylamino)uracil from GTP: step 1/4. Catalyzes the conversion of GTP to 2,5-diamino-6-ribosylamino-4(3H)-pyrimidinone 5'-phosphate (DARP), formate and pyrophosphate. The chain is GTP cyclohydrolase-2 from Hahella chejuensis (strain KCTC 2396).